We begin with the raw amino-acid sequence, 196 residues long: V-type proton ATPase subunit E (196 aa).

Belongs to the V-ATPase E subunit family.

Its function is as follows. Produces ATP from ADP in the presence of a proton gradient across the membrane. In Clostridium botulinum (strain Alaska E43 / Type E3), this protein is V-type proton ATPase subunit E.